Reading from the N-terminus, the 252-residue chain is 2-C-methyl-D-erythritol 4-phosphate cytidylyltransferase (252 aa).

The protein belongs to the IspD/TarI cytidylyltransferase family. IspD subfamily.

The catalysed reaction is 2-C-methyl-D-erythritol 4-phosphate + CTP + H(+) = 4-CDP-2-C-methyl-D-erythritol + diphosphate. The protein operates within isoprenoid biosynthesis; isopentenyl diphosphate biosynthesis via DXP pathway; isopentenyl diphosphate from 1-deoxy-D-xylulose 5-phosphate: step 2/6. Catalyzes the formation of 4-diphosphocytidyl-2-C-methyl-D-erythritol from CTP and 2-C-methyl-D-erythritol 4-phosphate (MEP). This chain is 2-C-methyl-D-erythritol 4-phosphate cytidylyltransferase, found in Chlorobium phaeobacteroides (strain BS1).